The primary structure comprises 112 residues: Urease subunit beta (112 aa).

It belongs to the urease beta subunit family. As to quaternary structure, heterotrimer of UreA (gamma), UreB (beta) and UreC (alpha) subunits. Three heterotrimers associate to form the active enzyme.

Its subcellular location is the cytoplasm. The catalysed reaction is urea + 2 H2O + H(+) = hydrogencarbonate + 2 NH4(+). It functions in the pathway nitrogen metabolism; urea degradation; CO(2) and NH(3) from urea (urease route): step 1/1. This chain is Urease subunit beta, found in Polaromonas sp. (strain JS666 / ATCC BAA-500).